A 241-amino-acid chain; its full sequence is Ubiquinone biosynthesis O-methyltransferase (241 aa).

Arg-42, Gly-62, Asp-83, and Met-127 together coordinate S-adenosyl-L-methionine.

It belongs to the methyltransferase superfamily. UbiG/COQ3 family.

The catalysed reaction is a 3-demethylubiquinol + S-adenosyl-L-methionine = a ubiquinol + S-adenosyl-L-homocysteine + H(+). The enzyme catalyses a 3-(all-trans-polyprenyl)benzene-1,2-diol + S-adenosyl-L-methionine = a 2-methoxy-6-(all-trans-polyprenyl)phenol + S-adenosyl-L-homocysteine + H(+). It functions in the pathway cofactor biosynthesis; ubiquinone biosynthesis. O-methyltransferase that catalyzes the 2 O-methylation steps in the ubiquinone biosynthetic pathway. This Pectobacterium atrosepticum (strain SCRI 1043 / ATCC BAA-672) (Erwinia carotovora subsp. atroseptica) protein is Ubiquinone biosynthesis O-methyltransferase.